The following is a 159-amino-acid chain: Outer envelope pore protein 16-3, chloroplastic/mitochondrial (159 aa).

Met1 is modified (N-acetylmethionine). The tract at residues 1 to 65 (MDPAEMRYLE…IRTLKMMGTH (65 aa)) is contains beta strands. Helical transmembrane passes span 24–40 (ITGF…LATW), 62–79 (MGTH…YIGV), and 92–109 (FYNG…VLGY).

The protein belongs to the Tim17/Tim22/Tim23 family. Plastid outer envelope porin OEP16 (TC 1.B.30) subfamily. Homodimer and oligomers in membrane. Part of both the NADH-ubiquinone oxidoreductase complex I and of the TIM17:23 complex. Interacts with TIM23-2.

The protein localises to the plastid. The protein resides in the chloroplast outer membrane. It is found in the mitochondrion outer membrane. It localises to the mitochondrion inner membrane. Functionally, voltage-dependent high-conductance channel with a slight cation-selectivity; selective for amino acids but excludes triosephosphates or uncharged sugars. Non-essential amino acid-selective channel protein and translocation pore for NADPH:protochlorophyllide oxidoreductase A (PORA) and possibly PORB. This chain is Outer envelope pore protein 16-3, chloroplastic/mitochondrial (OEP163), found in Arabidopsis thaliana (Mouse-ear cress).